We begin with the raw amino-acid sequence, 397 residues long: MGASGLVWTLTIVLIAGLMLVDYVLHVRKTHVPTLRQAVIQSATFVGIAILFGIAVVVFGGSELAVEYFACYLTDEALSVDNLFVFLVIISSFGVPRLAQQKVLLFGIAFALVTRTGFIFVGAALIENFNSAFYLFGLVLLVMAGNLARPTGLESRDAETLKRSVIIRLADRFLRTSQDYNGDRLFTVSNNKRMMTPLLLVMIAVGGTDILFAFDSIPALFGLTQNVYLVFAATAFSLLGLRQLYFLIDSLLDRLVYLSYGLAVILGFIGVKLMLEALHDNKIPFINGGKPVPTVEVSTTQSLTVIIIVLLITTAASFWSARGRAQNAMARARRYATAYLDLHYETESAERDKIFTALLAAERQINTLPTKYRMQPGQDDDLMTLLCRAHAARDAHM.

The next 9 helical transmembrane spans lie at 1-21 (MGAS…LMLV), 39-59 (VIQS…VVVF), 76-96 (EALS…FGVP), 103-123 (VLLF…FVGA), 124-144 (ALIE…LVMA), 194-214 (MMTP…LFAF), 219-239 (ALFG…FSLL), 255-275 (LVYL…KLML), and 301-321 (QSLT…FWSA).

This sequence belongs to the TerC family.

The protein localises to the cell membrane. This is an uncharacterized protein from Mycobacterium tuberculosis (strain CDC 1551 / Oshkosh).